Consider the following 185-residue polypeptide: Peptidyl-tRNA hydrolase (185 aa).

Position 14 (Tyr-14) interacts with tRNA. His-19 serves as the catalytic Proton acceptor. Residues Tyr-64, Asn-66, and Asn-112 each contribute to the tRNA site.

This sequence belongs to the PTH family. Monomer.

It is found in the cytoplasm. The enzyme catalyses an N-acyl-L-alpha-aminoacyl-tRNA + H2O = an N-acyl-L-amino acid + a tRNA + H(+). Its function is as follows. Hydrolyzes ribosome-free peptidyl-tRNAs (with 1 or more amino acids incorporated), which drop off the ribosome during protein synthesis, or as a result of ribosome stalling. Functionally, catalyzes the release of premature peptidyl moieties from peptidyl-tRNA molecules trapped in stalled 50S ribosomal subunits, and thus maintains levels of free tRNAs and 50S ribosomes. The chain is Peptidyl-tRNA hydrolase from Lactiplantibacillus plantarum (strain ATCC BAA-793 / NCIMB 8826 / WCFS1) (Lactobacillus plantarum).